A 365-amino-acid chain; its full sequence is Flagellar P-ring protein (365 aa).

The first 19 residues, Met1–Ala19, serve as a signal peptide directing secretion.

Belongs to the FlgI family. In terms of assembly, the basal body constitutes a major portion of the flagellar organelle and consists of four rings (L,P,S, and M) mounted on a central rod.

It localises to the periplasm. It is found in the bacterial flagellum basal body. In terms of biological role, assembles around the rod to form the L-ring and probably protects the motor/basal body from shearing forces during rotation. The chain is Flagellar P-ring protein from Escherichia coli O9:H4 (strain HS).